The primary structure comprises 350 residues: Phosphate acyltransferase (350 aa).

This sequence belongs to the PlsX family. Homodimer. Probably interacts with PlsY.

The protein localises to the cytoplasm. It carries out the reaction a fatty acyl-[ACP] + phosphate = an acyl phosphate + holo-[ACP]. Its pathway is lipid metabolism; phospholipid metabolism. Its function is as follows. Catalyzes the reversible formation of acyl-phosphate (acyl-PO(4)) from acyl-[acyl-carrier-protein] (acyl-ACP). This enzyme utilizes acyl-ACP as fatty acyl donor, but not acyl-CoA. The chain is Phosphate acyltransferase from Magnetococcus marinus (strain ATCC BAA-1437 / JCM 17883 / MC-1).